The sequence spans 221 residues: Pyridoxal phosphate homeostasis protein (221 aa).

Lysine 26 is modified (N6-(pyridoxal phosphate)lysine).

The protein belongs to the pyridoxal phosphate-binding protein YggS/PROSC family.

Functionally, pyridoxal 5'-phosphate (PLP)-binding protein, which is involved in PLP homeostasis. This Corynebacterium glutamicum (strain ATCC 13032 / DSM 20300 / JCM 1318 / BCRC 11384 / CCUG 27702 / LMG 3730 / NBRC 12168 / NCIMB 10025 / NRRL B-2784 / 534) protein is Pyridoxal phosphate homeostasis protein.